Here is a 491-residue protein sequence, read N- to C-terminus: Ketol-acid reductoisomerase (NADP(+)) (491 aa).

The KARI N-terminal Rossmann domain maps to 15–208 (AQLGKCRFMA…GGHRAGVLES (194 aa)). Residues 45-48 (CGAQ), Arg-68, Arg-76, Ser-78, and 108-110 (DKQ) each bind NADP(+). His-132 is an active-site residue. Residue Gly-158 coordinates NADP(+). KARI C-terminal knotted domains lie at 209–344 (SFVA…TAPQ) and 345–484 (YEGK…MTDM). Residues Asp-217, Glu-221, Glu-389, and Glu-393 each coordinate Mg(2+). Substrate is bound at residue Ser-414.

Belongs to the ketol-acid reductoisomerase family. The cofactor is Mg(2+).

It carries out the reaction (2R)-2,3-dihydroxy-3-methylbutanoate + NADP(+) = (2S)-2-acetolactate + NADPH + H(+). The catalysed reaction is (2R,3R)-2,3-dihydroxy-3-methylpentanoate + NADP(+) = (S)-2-ethyl-2-hydroxy-3-oxobutanoate + NADPH + H(+). The protein operates within amino-acid biosynthesis; L-isoleucine biosynthesis; L-isoleucine from 2-oxobutanoate: step 2/4. Its pathway is amino-acid biosynthesis; L-valine biosynthesis; L-valine from pyruvate: step 2/4. Functionally, involved in the biosynthesis of branched-chain amino acids (BCAA). Catalyzes an alkyl-migration followed by a ketol-acid reduction of (S)-2-acetolactate (S2AL) to yield (R)-2,3-dihydroxy-isovalerate. In the isomerase reaction, S2AL is rearranged via a Mg-dependent methyl migration to produce 3-hydroxy-3-methyl-2-ketobutyrate (HMKB). In the reductase reaction, this 2-ketoacid undergoes a metal-dependent reduction by NADPH to yield (R)-2,3-dihydroxy-isovalerate. The chain is Ketol-acid reductoisomerase (NADP(+)) from Klebsiella pneumoniae subsp. pneumoniae (strain ATCC 700721 / MGH 78578).